A 286-amino-acid chain; its full sequence is 4-hydroxy-3-methylbut-2-enyl diphosphate reductase (286 aa).

Cysteine 12 lines the [4Fe-4S] cluster pocket. Residues histidine 47 and histidine 80 each coordinate (2E)-4-hydroxy-3-methylbut-2-enyl diphosphate. Dimethylallyl diphosphate-binding residues include histidine 47 and histidine 80. 2 residues coordinate isopentenyl diphosphate: histidine 47 and histidine 80. Position 102 (cysteine 102) interacts with [4Fe-4S] cluster. Histidine 130 contacts (2E)-4-hydroxy-3-methylbut-2-enyl diphosphate. Dimethylallyl diphosphate is bound at residue histidine 130. Histidine 130 contributes to the isopentenyl diphosphate binding site. Glutamate 132 serves as the catalytic Proton donor. (2E)-4-hydroxy-3-methylbut-2-enyl diphosphate is bound at residue threonine 170. [4Fe-4S] cluster is bound at residue cysteine 198. Residues serine 226, asparagine 228, and serine 270 each contribute to the (2E)-4-hydroxy-3-methylbut-2-enyl diphosphate site. Dimethylallyl diphosphate-binding residues include serine 226, asparagine 228, and serine 270. Residues serine 226, asparagine 228, and serine 270 each contribute to the isopentenyl diphosphate site.

It belongs to the IspH family. It depends on [4Fe-4S] cluster as a cofactor.

The enzyme catalyses isopentenyl diphosphate + 2 oxidized [2Fe-2S]-[ferredoxin] + H2O = (2E)-4-hydroxy-3-methylbut-2-enyl diphosphate + 2 reduced [2Fe-2S]-[ferredoxin] + 2 H(+). The catalysed reaction is dimethylallyl diphosphate + 2 oxidized [2Fe-2S]-[ferredoxin] + H2O = (2E)-4-hydroxy-3-methylbut-2-enyl diphosphate + 2 reduced [2Fe-2S]-[ferredoxin] + 2 H(+). It participates in isoprenoid biosynthesis; dimethylallyl diphosphate biosynthesis; dimethylallyl diphosphate from (2E)-4-hydroxy-3-methylbutenyl diphosphate: step 1/1. The protein operates within isoprenoid biosynthesis; isopentenyl diphosphate biosynthesis via DXP pathway; isopentenyl diphosphate from 1-deoxy-D-xylulose 5-phosphate: step 6/6. Catalyzes the conversion of 1-hydroxy-2-methyl-2-(E)-butenyl 4-diphosphate (HMBPP) into a mixture of isopentenyl diphosphate (IPP) and dimethylallyl diphosphate (DMAPP). Acts in the terminal step of the DOXP/MEP pathway for isoprenoid precursor biosynthesis. The protein is 4-hydroxy-3-methylbut-2-enyl diphosphate reductase of Desulfovibrio desulfuricans (strain ATCC 27774 / DSM 6949 / MB).